The sequence spans 701 residues: F-box/LRR-repeat protein 17 (701 aa).

Basic and acidic residues predominate over residues 1-11 (MGHLLSKEPRN). Disordered stretches follow at residues 1 to 20 (MGHL…RPRC), 72 to 94 (APAG…YAAA), and 227 to 300 (GGGG…DADC). A compositionally biased stretch (gly residues) spans 227–237 (GGGGGPAGGGA). Pro residues predominate over residues 252-264 (EQPPQPLCPPPSS). The 48-residue stretch at 318–365 (TPDINQLPPSILLKIFSNLSLDERCLSASLVCKYWRDLCLDFQFWKQL) folds into the F-box domain.

This sequence belongs to the FBXL17 family. As to quaternary structure, part of the SCF (SKP1-CUL1-F-box) E3 ubiquitin-protein ligase complex SCF(FBXL17) composed of CUL1, SKP1, RBX1 and FBXL17. Interacts with BTB domain-containing proteins such as KLHL12, BCL6 and BACH1; specifically recognizes and binds a conserved degron of non-consecutive residues present at the interface of BTB dimers of aberrant composition. Interacts with SUFU. Interacts with PRMT1.

It is found in the cytoplasm. Its subcellular location is the nucleus. Substrate-recognition component of the SCF(FBXL17) E3 ubiquitin ligase complex, a key component of a quality control pathway required to ensure functional dimerization of BTB domain-containing proteins (dimerization quality control, DQC). FBXL17 specifically recognizes and binds a conserved degron of non-consecutive residues present at the interface of BTB dimers of aberrant composition: aberrant BTB dimer are then ubiquitinated by the SCF(FBXL17) complex and degraded by the proteasome. The ability of the SCF(FBXL17) complex to eliminate compromised BTB dimers is required for the differentiation and survival of neural crest and neuronal cells. The SCF(FBXL17) complex mediates ubiquitination and degradation of BACH1. The SCF(FBXL17) complex is also involved in the regulation of the hedgehog/smoothened (Hh) signaling pathway by mediating the ubiquitination and degradation of SUFU, allowing the release of GLI1 from SUFU for proper Hh signal transduction. The SCF(FBXL17) complex mediates ubiquitination and degradation of PRMT1. The sequence is that of F-box/LRR-repeat protein 17 from Homo sapiens (Human).